Here is a 290-residue protein sequence, read N- to C-terminus: Zinc finger protein-like 1 homolog (290 aa).

Residues 1-43 form a B box-type; degenerate zinc finger; that stretch reads MGLCKCPKRQVTTQFCFEHRVNVCENCMVVNHTKCTVQSYIQW. Residues 53 to 101 form an RING-type; atypical zinc finger; that stretch reads CPLCGSPLDNEDCVRLICYHVFHWKCLNAKQQSLPANTAPGGHTCPTCS. A compositionally biased stretch (polar residues) spans 156-168; the sequence is NGNTFASSMSQTR. The tract at residues 156-175 is disordered; it reads NGNTFASSMSQTRSNERPES. Residues 249 to 269 traverse the membrane as a helical segment; that stretch reads WFLVLGGCIGFVCIIYVLATL.

The protein belongs to the ZFPL1 family.

The protein localises to the membrane. The polypeptide is Zinc finger protein-like 1 homolog (Aedes aegypti (Yellowfever mosquito)).